The primary structure comprises 254 residues: MLSGLVTALRTLTLFPVPGKETDTFSRSLFWFPVVGLLLGSIQAALGYFTSLLGWNELSAAFVVLGGIALTRGMHADGLADLADGFWGGRTRESALRIMKDPNVGSFGAIALSGMMLLKWIAILKLVDIGAFACIAAGVLLARWVQVLLASALPYARREGGTAQSFVSGAGVVHIVVTSALTLLFLFPLLHADLYANLYAVVAMISAALAAALLTGLLSYRKIGGVTGDVLGAGSEVTELFVWIAAALSAALKA.

Helical transmembrane passes span 29-49 (LFWF…LGYF), 50-70 (TSLL…GIAL), 98-118 (IMKD…MMLL), 121-141 (IAIL…GVLL), 170-190 (AGVV…FPLL), 198-218 (LYAV…TGLL), and 230-250 (VLGA…ALSA).

Belongs to the CobS family. Mg(2+) is required as a cofactor.

It is found in the cell inner membrane. The catalysed reaction is alpha-ribazole + adenosylcob(III)inamide-GDP = adenosylcob(III)alamin + GMP + H(+). It catalyses the reaction alpha-ribazole 5'-phosphate + adenosylcob(III)inamide-GDP = adenosylcob(III)alamin 5'-phosphate + GMP + H(+). Its pathway is cofactor biosynthesis; adenosylcobalamin biosynthesis; adenosylcobalamin from cob(II)yrinate a,c-diamide: step 7/7. Joins adenosylcobinamide-GDP and alpha-ribazole to generate adenosylcobalamin (Ado-cobalamin). Also synthesizes adenosylcobalamin 5'-phosphate from adenosylcobinamide-GDP and alpha-ribazole 5'-phosphate. The protein is Adenosylcobinamide-GDP ribazoletransferase of Pelodictyon phaeoclathratiforme (strain DSM 5477 / BU-1).